The sequence spans 605 residues: uncharacterized protein (605 aa).

The tract at residues 22-93 (FTEPARFYPS…KQGTAVHGAE (72 aa)) is disordered. Residues 46-57 (SENASSSVPSHS) are compositionally biased toward low complexity.

This is an uncharacterized protein from Treponema pallidum (strain Nichols).